The following is a 449-amino-acid chain: Tubulin beta-5 chain (449 aa).

Residues Gln-11, Glu-70, Ser-139, Gly-143, Thr-144, Gly-145, Asn-205, and Asn-227 each coordinate GTP. Glu-70 lines the Mg(2+) pocket. Residues 427–449 are disordered; the sequence is QDATADEEGEYDVEEEEEGDYET. Acidic residues predominate over residues 430-449; it reads TADEEGEYDVEEEEEGDYET.

The protein belongs to the tubulin family. As to quaternary structure, dimer of alpha and beta chains. A typical microtubule is a hollow water-filled tube with an outer diameter of 25 nm and an inner diameter of 15 nM. Alpha-beta heterodimers associate head-to-tail to form protofilaments running lengthwise along the microtubule wall with the beta-tubulin subunit facing the microtubule plus end conferring a structural polarity. Microtubules usually have 13 protofilaments but different protofilament numbers can be found in some organisms and specialized cells. Mg(2+) serves as cofactor.

Its subcellular location is the cytoplasm. It localises to the cytoskeleton. In terms of biological role, tubulin is the major constituent of microtubules, a cylinder consisting of laterally associated linear protofilaments composed of alpha- and beta-tubulin heterodimers. Microtubules grow by the addition of GTP-tubulin dimers to the microtubule end, where a stabilizing cap forms. Below the cap, tubulin dimers are in GDP-bound state, owing to GTPase activity of alpha-tubulin. The polypeptide is Tubulin beta-5 chain (TUBB5) (Arabidopsis thaliana (Mouse-ear cress)).